A 423-amino-acid chain; its full sequence is Protein CLP1 homolog (423 aa).

Residues Glu-16, Lys-57, and 119–124 (DVGKST) each bind ATP.

It belongs to the Clp1 family. Clp1 subfamily.

It is found in the nucleus. Functionally, required for endonucleolytic cleavage during polyadenylation-dependent pre-mRNA 3'-end formation. The chain is Protein CLP1 homolog (cbc) from Drosophila sechellia (Fruit fly).